Consider the following 337-residue polypeptide: Putative carboxypeptidase TP_0688 (337 aa).

The Nucleophile role is filled by S118. Active-site charge relay system residues include E234 and H302.

Belongs to the peptidase S66 family.

This is Putative carboxypeptidase TP_0688 from Treponema pallidum (strain Nichols).